A 683-amino-acid chain; its full sequence is DNA ligase (683 aa).

NAD(+)-binding positions include 35–39 (DAEYD), 81–82 (SL), and Glu112. Residue Lys114 is the N6-AMP-lysine intermediate of the active site. Residues Arg135, Glu170, Lys277, and Lys301 each coordinate NAD(+). Positions 395, 398, 411, and 417 each coordinate Zn(2+). Residues 601–683 (SSNSVLNNKV…YRMINSEVSE (83 aa)) enclose the BRCT domain.

The protein belongs to the NAD-dependent DNA ligase family. LigA subfamily. Mg(2+) serves as cofactor. Requires Mn(2+) as cofactor.

The enzyme catalyses NAD(+) + (deoxyribonucleotide)n-3'-hydroxyl + 5'-phospho-(deoxyribonucleotide)m = (deoxyribonucleotide)n+m + AMP + beta-nicotinamide D-nucleotide.. Functionally, DNA ligase that catalyzes the formation of phosphodiester linkages between 5'-phosphoryl and 3'-hydroxyl groups in double-stranded DNA using NAD as a coenzyme and as the energy source for the reaction. It is essential for DNA replication and repair of damaged DNA. The polypeptide is DNA ligase (Wolbachia sp. subsp. Brugia malayi (strain TRS)).